A 255-amino-acid chain; its full sequence is F-box/SPRY domain-containing protein 1 (255 aa).

One can recognise an F-box domain in the interval 3–51; it reads DPVAALCNYNVLEVIFSYLELEDLNHCSQVCKSWYHFLNDENSDVWRWH. Residues 61-253 enclose the B30.2/SPRY domain; it reads LKSDLLASVS…VSMVYLGTPL (193 aa).

This sequence belongs to the FBXO45/Fsn family. As to quaternary structure, component of an E3 ubiquitin ligase complex composed of hiw and Fsn.

It localises to the synapse. The protein operates within protein modification; protein ubiquitination. Required in the presynaptic motoneuron to down-regulate the levels of wnd and restrain synaptic terminal growth at the neuromuscular junction (NMJ). The polypeptide is F-box/SPRY domain-containing protein 1 (Drosophila yakuba (Fruit fly)).